Consider the following 701-residue polypeptide: Polyribonucleotide nucleotidyltransferase (701 aa).

Asp-485 and Asp-491 together coordinate Mg(2+). Residues 552-611 form the KH domain; the sequence is PKTQIMSINPDKIRDVIGAGGKVINKIIQDTGVKIDIKEDGTVFVSSTDHNGVNEAIKII. The region spanning 621-689 is the S1 motif domain; it reads GEVYLGKVTK…NQGRINLSRK (69 aa).

The protein belongs to the polyribonucleotide nucleotidyltransferase family. It depends on Mg(2+) as a cofactor.

It is found in the cytoplasm. The catalysed reaction is RNA(n+1) + phosphate = RNA(n) + a ribonucleoside 5'-diphosphate. Functionally, involved in mRNA degradation. Catalyzes the phosphorolysis of single-stranded polyribonucleotides processively in the 3'- to 5'-direction. This Clostridium beijerinckii (strain ATCC 51743 / NCIMB 8052) (Clostridium acetobutylicum) protein is Polyribonucleotide nucleotidyltransferase.